A 225-amino-acid chain; its full sequence is Peroxiredoxin-2E-2, chloroplastic (225 aa).

The transit peptide at 1–42 (MAAPTAAALSTLSTASVTSGKRFITSSFSLSFSSRPLATGVR) directs the protein to the chloroplast. In terms of domain architecture, Thioredoxin spans 63-225 (IAVGDKLPDA…SSAEEMLKAL (163 aa)). Catalysis depends on cysteine 111, which acts as the Cysteine sulfenic acid (-SOH) intermediate.

It belongs to the peroxiredoxin family. Prx5 subfamily. In terms of assembly, monomer.

It is found in the plastid. Its subcellular location is the chloroplast stroma. The enzyme catalyses [glutaredoxin]-dithiol + a hydroperoxide = [glutaredoxin]-disulfide + an alcohol + H2O. Thiol-specific peroxidase that catalyzes the reduction of hydrogen peroxide and organic hydroperoxides to water and alcohols, respectively. Plays a role in cell protection against oxidative stress by detoxifying peroxides. May be involved in chloroplast redox homeostasis. This chain is Peroxiredoxin-2E-2, chloroplastic (PRXIIE-2), found in Oryza sativa subsp. japonica (Rice).